The following is a 285-amino-acid chain: HTH-type transcriptional activator AmpR (285 aa).

The region spanning 5-62 (LPLNALRAFEASARHLSFTRAALELCVTQAAVSQQVRILEDRLNRVLFKRLPRGLEMT) is the HTH lysR-type domain. A DNA-binding region (H-T-H motif) is located at residues 22–41 (FTRAALELCVTQAAVSQQVR).

This sequence belongs to the LysR transcriptional regulatory family.

It is found in the cytoplasm. Its function is as follows. This protein is a positive regulator of gene expression of beta-lactamase (AmpC). This is HTH-type transcriptional activator AmpR (ampR) from Citrobacter koseri (Citrobacter diversus).